We begin with the raw amino-acid sequence, 374 residues long: MSVPAFIDISEEDQAAELRAYLKSKGAEISEENSEGGLHIDLAQIIEACDVCLKEDDKDVESVMNSVVSLLLILEPDKQEALIESLCEKLVKFREGERPSLRLQLLSNLFHGMDKNTPVRYTVYCSLIKVAASCGAIQYIPTELDQVRKWISDWNLTTEKKHTLLRLLYEALVDCKKSDAASKVMVELLGSYTEDNASQARVDAHRCIVRALKDPNAFLFDHLLTLKPVKFLEGELIHDLLTIFVSAKLASYVKFYQNNKDFIDSLGLLHEQNMAKMRLLTFMGMAVENKEISFDTMQQELQIGADDVEAFVIDAVRTKMVYCKIDQTQRKVVVSHSTHRTFGKQQWQQLYDTLNAWKQNLNKVKNSLLSLSDT.

Residue Ser2 is modified to N-acetylserine. 2 positions are modified to phosphoserine: Ser2 and Ser152. The PCI domain maps to 180 to 339 (AASKVMVELL…RKVVVSHSTH (160 aa)). Lys254 carries the N6-acetyllysine modification. Ser367 bears the Phosphoserine mark.

Belongs to the eIF-3 subunit M family. Component of the eukaryotic translation initiation factor 3 (eIF-3) complex, which is composed of 13 subunits: EIF3A, EIF3B, EIF3C, EIF3D, EIF3E, EIF3F, EIF3G, EIF3H, EIF3I, EIF3J, EIF3K, EIF3L and EIF3M. The eIF-3 complex appears to include 3 stable modules: module A is composed of EIF3A, EIF3B, EIF3G and EIF3I; module B is composed of EIF3F, EIF3H, and EIF3M; and module C is composed of EIF3C, EIF3D, EIF3E, EIF3K and EIF3L. EIF3C of module C binds EIF3B of module A and EIF3H of module B, thereby linking the three modules. EIF3J is a labile subunit that binds to the eIF-3 complex via EIF3B. The eIF-3 complex interacts with RPS6KB1 under conditions of nutrient depletion. Mitogenic stimulation leads to binding and activation of a complex composed of MTOR and RPTOR, leading to phosphorylation and release of RPS6KB1 and binding of EIF4B to eIF-3.

The protein localises to the cytoplasm. In terms of biological role, component of the eukaryotic translation initiation factor 3 (eIF-3) complex, which is required for several steps in the initiation of protein synthesis. The eIF-3 complex associates with the 40S ribosome and facilitates the recruitment of eIF-1, eIF-1A, eIF-2:GTP:methionyl-tRNAi and eIF-5 to form the 43S pre-initiation complex (43S PIC). The eIF-3 complex stimulates mRNA recruitment to the 43S PIC and scanning of the mRNA for AUG recognition. The eIF-3 complex is also required for disassembly and recycling of post-termination ribosomal complexes and subsequently prevents premature joining of the 40S and 60S ribosomal subunits prior to initiation. The eIF-3 complex specifically targets and initiates translation of a subset of mRNAs involved in cell proliferation, including cell cycling, differentiation and apoptosis, and uses different modes of RNA stem-loop binding to exert either translational activation or repression. The chain is Eukaryotic translation initiation factor 3 subunit M from Pongo abelii (Sumatran orangutan).